The primary structure comprises 627 residues: (-)-beta-pinene synthase 1, chloroplastic (627 aa).

Residues 1-50 (MDLISVLPSTSKSCVCLHKPLSSSTHKLKPFCRTIRILGMPRPRKSVLMA) constitute a chloroplast transit peptide. Residues D378, D382, and D530 each coordinate Mg(2+). The DDXXD motif signature appears at 378–382 (DDMYD).

Belongs to the terpene synthase family. Tpsd subfamily. It depends on Mg(2+) as a cofactor. Mn(2+) serves as cofactor.

It localises to the plastid. It is found in the chloroplast. It carries out the reaction (2E)-geranyl diphosphate = (1S,5S)-beta-pinene + diphosphate. The catalysed reaction is (2E)-geranyl diphosphate = (1S,5S)-alpha-pinene + diphosphate. The protein operates within terpene metabolism; oleoresin biosynthesis. It functions in the pathway secondary metabolite biosynthesis; terpenoid biosynthesis. In terms of biological role, monoterpene synthase (TPS) involved in the biosynthesis of monoterpene natural products included in conifer oleoresin secretions and volatile emissions; these compounds contribute to biotic and abiotic stress defense against herbivores and pathogens. Catalyzes the conversion of (2E)-geranyl diphosphate (GPP) to (-)-beta-pinene and, to a lower extent, to (-)-alpha-pinene. The polypeptide is (-)-beta-pinene synthase 1, chloroplastic (Pinus contorta (Shore pine)).